Consider the following 94-residue polypeptide: Cystatin-A1 (94 aa).

The short motif at 45–49 is the Secondary area of contact element; sequence QLVAG.

The protein belongs to the cystatin family.

It is found in the cytoplasm. In terms of biological role, intracellular thiol proteinase inhibitor. Inhibits papain, but not cathepsin B. The protein is Cystatin-A1 (cpiA) of Dictyostelium discoideum (Social amoeba).